Consider the following 402-residue polypeptide: Deoxyguanosinetriphosphate triphosphohydrolase-like protein (402 aa).

A disordered region spans residues 20–39 (PAFSRGRLVPEPESPTRTPF). One can recognise an HD domain in the interval 73–217 (RLTHTIEVAQ…AAIADDIAYN (145 aa)).

Belongs to the dGTPase family. Type 2 subfamily.

The protein is Deoxyguanosinetriphosphate triphosphohydrolase-like protein of Brucella canis (strain ATCC 23365 / NCTC 10854 / RM-666).